The sequence spans 72 residues: Crustacean hyperglycemic hormone B (72 aa).

Glutamine 1 is subject to Pyrrolidone carboxylic acid. Phenylalanine 3 carries the post-translational modification D-phenylalanine; in form CHHB-II. 3 cysteine pairs are disulfide-bonded: cysteine 7–cysteine 43, cysteine 23–cysteine 39, and cysteine 26–cysteine 52. A Valine amide modification is found at valine 72.

Post-translationally, stereoinversion of L-Phe (in CHHB-I) to D-Phe (in CHHB-II).

The protein resides in the secreted. Functionally, hormone found in the sinus gland of isopods and decapods which controls the blood sugar level. Has a secretagogue action over the amylase released from the midgut gland. May act as a stress hormone and may be involved in the control of molting and reproduction. This Cherax destructor (Common yabby crayfish) protein is Crustacean hyperglycemic hormone B.